The primary structure comprises 213 residues: Pyridoxine/pyridoxamine 5'-phosphate oxidase (213 aa).

Substrate contacts are provided by residues 8 to 11 (RKNY) and Lys-66. Residues 61–66 (RIVLIK), 76–77 (FT), Arg-82, Lys-83, and Gln-105 each bind FMN. The substrate site is built by Tyr-123, Arg-127, and Ser-131. Residues 140 to 141 (QS) and Trp-184 contribute to the FMN site. 190 to 192 (RLH) contacts substrate. Arg-194 lines the FMN pocket.

This sequence belongs to the pyridoxamine 5'-phosphate oxidase family. In terms of assembly, homodimer. FMN is required as a cofactor.

It catalyses the reaction pyridoxamine 5'-phosphate + O2 + H2O = pyridoxal 5'-phosphate + H2O2 + NH4(+). It carries out the reaction pyridoxine 5'-phosphate + O2 = pyridoxal 5'-phosphate + H2O2. It functions in the pathway cofactor metabolism; pyridoxal 5'-phosphate salvage; pyridoxal 5'-phosphate from pyridoxamine 5'-phosphate: step 1/1. The protein operates within cofactor metabolism; pyridoxal 5'-phosphate salvage; pyridoxal 5'-phosphate from pyridoxine 5'-phosphate: step 1/1. Its function is as follows. Catalyzes the oxidation of either pyridoxine 5'-phosphate (PNP) or pyridoxamine 5'-phosphate (PMP) into pyridoxal 5'-phosphate (PLP). This chain is Pyridoxine/pyridoxamine 5'-phosphate oxidase, found in Paraburkholderia phytofirmans (strain DSM 17436 / LMG 22146 / PsJN) (Burkholderia phytofirmans).